The sequence spans 650 residues: Hemocyanin subunit 2 (650 aa).

Residues Ser120 and Ser172 are each glycosylated (O-linked (GalNAc...) serine). Cu cation is bound by residues His193, His197, and His225. Residue Asn309 is glycosylated (N-linked (GlcNAc...) asparagine). Cu cation is bound by residues His344, His348, and His384.

This sequence belongs to the tyrosinase family. Hemocyanin subfamily. Hexamer of a number of different chains, of which five have been identified. Post-translationally, contains one N-glycosylated and three O-glycosylated residues. The position of one of the O-glycosylated residues has not been determined. O-linked glycan at Ser-120 may be composed of two GalNAc, three Gal, and two N-acetylneuraminic acid units for a total 1525-Da MW. Hemolymph.

The protein localises to the secreted. The protein resides in the extracellular space. In terms of biological role, hemocyanins are copper-containing oxygen carriers occurring freely dissolved in the hemolymph of many mollusks and arthropods. The chain is Hemocyanin subunit 2 from Carcinus aestuarii (Green crab).